The sequence spans 87 residues: Small ribosomal subunit protein uS19m (87 aa).

It belongs to the universal ribosomal protein uS19 family.

The protein localises to the mitochondrion. The sequence is that of Small ribosomal subunit protein uS19m (mrps19) from Dictyostelium citrinum (Slime mold).